Consider the following 342-residue polypeptide: Predicted GPI-anchored protein 54 (342 aa).

The signal sequence occupies residues 1 to 16 (MRANYLLLLAATAVQA). 3 N-linked (GlcNAc...) asparagine glycosylation sites follow: N25, N105, and N151. G314 carries the GPI-anchor amidated glycine lipid modification. The propeptide at 315-342 (ASQSHPISSYSNYTISDYAPPISSYYSL) is removed in mature form. A glycan (N-linked (GlcNAc...) asparagine) is linked at N326.

Its subcellular location is the cell membrane. The sequence is that of Predicted GPI-anchored protein 54 (PGA54) from Candida albicans (strain SC5314 / ATCC MYA-2876) (Yeast).